A 328-amino-acid chain; its full sequence is Nickel import system permease protein NikB (328 aa).

6 consecutive transmembrane segments (helical) span residues 11–31 (LMQM…LMKL), 104–124 (LLIS…LGII), 139–159 (VIST…LLFI), 170–190 (ILSQ…AYII), 229–249 (ILPI…GTVV), and 279–299 (VLFI…LTLL). The ABC transmembrane type-1 domain maps to 100–297 (APITLLISFS…IINTIADLLT (198 aa)).

Belongs to the binding-protein-dependent transport system permease family. OppBC subfamily. The complex is composed of two ATP-binding proteins (NikD and NikE), two transmembrane proteins (NikB and NikC) and a solute-binding protein (NikA).

The protein localises to the cell membrane. Its function is as follows. Part of the ABC transporter complex NikABCDE (Opp2) involved in nickel import. Probably responsible for the translocation of the substrate across the membrane. The polypeptide is Nickel import system permease protein NikB (Staphylococcus aureus (strain bovine RF122 / ET3-1)).